The following is a 1411-amino-acid chain: ATP-dependent permease PDR11 (1411 aa).

Over 2 to 388 the chain is Cytoplasmic; that stretch reads SLSKYFNPIP…IGDRNYLISQ (387 aa). The region spanning 31-273 is the ABC transporter 1 domain; sequence VQNDEESASE…FHDTLQIKKN (243 aa). A helical transmembrane segment spans residues 389 to 409; sequence FVSVVVQSLVIGSLFYNIPLT. The Extracellular portion of the chain corresponds to 410–418; that stretch reads TIGSFSRGS. Residues 419-439 traverse the membrane as a helical segment; sequence LTFFSILFFTFLSLADMPASF. At 440 to 471 the chain is on the cytoplasmic side; that stretch reads QRQPVVRKHVQLHFYYNWVETLATNFFDCCSK. A helical membrane pass occupies residues 472 to 492; that stretch reads FILVVIFTIILYFLAHLQYNA. At 493-494 the chain is on the extracellular side; sequence AR. A helical transmembrane segment spans residues 495 to 515; it reads FFIFLLFLSVYNFCMVSLFAL. Topologically, residues 516–524 are cytoplasmic; the sequence is TALIAPTLS. Residues 525-545 traverse the membrane as a helical segment; sequence MANLLAGILLLAIAMYASYVI. Residues 546 to 636 are Extracellular-facing; that stretch reads YMKDMHPWFI…YTYHHVWRNF (91 aa). N-linked (GlcNAc...) asparagine glycosylation is present at Asn595. Residues 637 to 657 traverse the membrane as a helical segment; it reads GIIIGFLCFFLFCSLLAAEYI. The Cytoplasmic portion of the chain corresponds to 658–1090; the sequence is TPLFTRENLL…QYICTKRDMT (433 aa). An ABC transporter 2 domain is found at 751-979; that stretch reads ISWKNINYTI…FVAHDRRLTF (229 aa). 782-789 serves as a coordination point for ATP; sequence GESGAGKT. The chain crosses the membrane as a helical span at residues 1091 to 1111; sequence YVFAKYALNAGAGLFIGFSFW. The Extracellular segment spans residues 1112–1117; sequence RTKHNI. A helical transmembrane segment spans residues 1118-1138; the sequence is NGLQDAIFLCFMMLCVSSPLI. Topologically, residues 1139-1175 are cytoplasmic; it reads NQVQDKALQSKEVYIAREARSNTYHWTVLLIAQTIVE. The chain crosses the membrane as a helical span at residues 1176–1196; sequence LPLAISSSTLFFLCCYFCCGF. Residues 1197 to 1204 lie on the Extracellular side of the membrane; it reads ETSARVAG. A helical membrane pass occupies residues 1205 to 1225; the sequence is VFYLNYILFSMYYLSFGLWLL. Residues 1226–1230 are Cytoplasmic-facing; the sequence is YSAPD. Residues 1231–1251 traverse the membrane as a helical segment; that stretch reads LQTAAVFVAFLYSFTASFCGV. Over 1252 to 1355 the chain is Extracellular; the sequence is MQPYSLFPRF…NMSYHHRWRN (104 aa). N-linked (GlcNAc...) asparagine glycosylation is found at Asn1289, Asn1324, and Asn1346. A helical transmembrane segment spans residues 1356-1376; sequence FGFEWVFVCFNIAAMFVGFYL. The Cytoplasmic portion of the chain corresponds to 1377–1411; the sequence is TYIKKIWPSVIDGIKKCIPSMRRSKTSHNPNEQSV.

It belongs to the ABC transporter superfamily. ABCG family. PDR (TC 3.A.1.205) subfamily.

The protein localises to the membrane. Transporter involved in the uptake of sterol. This is ATP-dependent permease PDR11 (PDR11) from Saccharomyces cerevisiae (strain ATCC 204508 / S288c) (Baker's yeast).